A 223-amino-acid polypeptide reads, in one-letter code: Deoxyribose-phosphate aldolase (223 aa).

The active-site Proton donor/acceptor is D91. Residue K153 is the Schiff-base intermediate with acetaldehyde of the active site. K182 (proton donor/acceptor) is an active-site residue.

It belongs to the DeoC/FbaB aldolase family. DeoC type 1 subfamily.

Its subcellular location is the cytoplasm. It catalyses the reaction 2-deoxy-D-ribose 5-phosphate = D-glyceraldehyde 3-phosphate + acetaldehyde. It participates in carbohydrate degradation; 2-deoxy-D-ribose 1-phosphate degradation; D-glyceraldehyde 3-phosphate and acetaldehyde from 2-deoxy-alpha-D-ribose 1-phosphate: step 2/2. Functionally, catalyzes a reversible aldol reaction between acetaldehyde and D-glyceraldehyde 3-phosphate to generate 2-deoxy-D-ribose 5-phosphate. This is Deoxyribose-phosphate aldolase from Streptococcus pyogenes serotype M3 (strain ATCC BAA-595 / MGAS315).